The following is a 428-amino-acid chain: Maltoporin (428 aa).

Positions 1–21 (MKKTLLAVAIGGAMFATSAAA) are cleaved as a signal peptide.

This sequence belongs to the porin LamB (TC 1.B.3) family. As to quaternary structure, homotrimer formed of three 18-stranded antiparallel beta-barrels, containing three independent channels.

The protein resides in the cell outer membrane. The catalysed reaction is beta-maltose(in) = beta-maltose(out). In terms of biological role, involved in the transport of maltose and maltodextrins. This is Maltoporin from Mannheimia succiniciproducens (strain KCTC 0769BP / MBEL55E).